Consider the following 226-residue polypeptide: 2,3-bisphosphoglycerate-dependent phosphoglycerate mutase (226 aa).

Substrate contacts are provided by residues 8–15 (RHGQSVWN), 21–22 (TG), Arg-58, 109–112 (ERMY), Lys-120, 136–137 (RR), and 180–181 (GN). His-9 acts as the Tele-phosphohistidine intermediate in catalysis. Glu-109 functions as the Proton donor/acceptor in the catalytic mechanism.

The protein belongs to the phosphoglycerate mutase family. BPG-dependent PGAM subfamily.

It catalyses the reaction (2R)-2-phosphoglycerate = (2R)-3-phosphoglycerate. The protein operates within carbohydrate degradation; glycolysis; pyruvate from D-glyceraldehyde 3-phosphate: step 3/5. In terms of biological role, catalyzes the interconversion of 2-phosphoglycerate and 3-phosphoglycerate. The chain is 2,3-bisphosphoglycerate-dependent phosphoglycerate mutase from Chlamydia trachomatis serovar L2 (strain ATCC VR-902B / DSM 19102 / 434/Bu).